We begin with the raw amino-acid sequence, 385 residues long: Arginine biosynthesis bifunctional protein ArgJ (385 aa).

Positions 142, 168, 179, 259, 380, and 385 each coordinate substrate. The active-site Nucleophile is the Thr179.

This sequence belongs to the ArgJ family. In terms of assembly, heterotetramer of two alpha and two beta chains.

It is found in the cytoplasm. It carries out the reaction N(2)-acetyl-L-ornithine + L-glutamate = N-acetyl-L-glutamate + L-ornithine. The catalysed reaction is L-glutamate + acetyl-CoA = N-acetyl-L-glutamate + CoA + H(+). It functions in the pathway amino-acid biosynthesis; L-arginine biosynthesis; L-ornithine and N-acetyl-L-glutamate from L-glutamate and N(2)-acetyl-L-ornithine (cyclic): step 1/1. The protein operates within amino-acid biosynthesis; L-arginine biosynthesis; N(2)-acetyl-L-ornithine from L-glutamate: step 1/4. Its function is as follows. Catalyzes two activities which are involved in the cyclic version of arginine biosynthesis: the synthesis of N-acetylglutamate from glutamate and acetyl-CoA as the acetyl donor, and of ornithine by transacetylation between N(2)-acetylornithine and glutamate. The polypeptide is Arginine biosynthesis bifunctional protein ArgJ (Leptospira interrogans serogroup Icterohaemorrhagiae serovar Lai (strain 56601)).